A 387-amino-acid chain; its full sequence is Eukaryotic translation initiation factor 3 subunit M (387 aa).

Residues 181-340 form the PCI domain; sequence LSSKVMIELL…RKVHISSTMH (160 aa).

It belongs to the eIF-3 subunit M family. As to quaternary structure, component of the eukaryotic translation initiation factor 3 (eIF-3) complex. The eIF-3 complex interacts with pix.

It is found in the cytoplasm. The protein resides in the golgi apparatus. Its function is as follows. Component of the eukaryotic translation initiation factor 3 (eIF-3) complex, which is involved in protein synthesis of a specialized repertoire of mRNAs and, together with other initiation factors, stimulates binding of mRNA and methionyl-tRNAi to the 40S ribosome. The eIF-3 complex specifically targets and initiates translation of a subset of mRNAs involved in cell proliferation. The sequence is that of Eukaryotic translation initiation factor 3 subunit M from Drosophila persimilis (Fruit fly).